The chain runs to 580 residues: Viral transcription factor IE2 (580 aa).

A compositionally biased stretch (basic and acidic residues) spans 1–11 (MESSAKRKMDP). Disordered stretches follow at residues 1–30 (MESSAKRKMDPDNPDEGPSSKVPRPETPVT) and 99–161 (DSSS…VIIK). A compositionally biased stretch (polar residues) spans 99–133 (DSSSTGPTLTTHSCSVSSAPLNKPTPTSVAVTNTP). Residues Lys175 and Lys180 each participate in a glycyl lysine isopeptide (Lys-Gly) (interchain with G-Cter in SUMO) cross-link. The short motif at 199–202 (CIVI) is the SUMO-interacting motif 1/SIM1 element. Residues Ser203 and Ser205 each carry the phosphoserine; by host CK2 modification. Residues 206 to 335 (EEEQGEEVET…KSKRISELDN (130 aa)) are disordered. Low complexity-rich tracts occupy residues 216–236 (RGATASSPSTGSGTPRVTSPT), 259–271 (SSSSSSSCSSASD), and 302–317 (AASSSLLSCGHQSSGG). The short motif at 410 to 413 (IQII) is the SUMO-interacting motif 1/SIM2 element. Residues 501 to 504 (VDLL) carry the SUMO-interacting motif 1/SIM3 motif.

This sequence belongs to the HHV-5 IE2 protein family. Interacts with host SUMO-modified form of TATA-binding protein (TBP)-associated factor 12/TAF12 in a SIM-dependent manner; this interaction increases the transactivation activity of IE2. Interacts with host CHAF1A. Interacts with several components of the host transcriptional machinery including TBP, TF2B and CREB1. Interacts with host DNA replication licensing factor MCM3. Interacts with host PLSCR1; this interaction inhibits IE2 transactivating activity. In terms of processing, phosphorylated by host CK2 at Ser-203 and Ser-205; leading to enhanced SUMOylation. SUMOylated; SUMOylation is enhanced when IE2 is phosphorylated by host CK2. The sumoylation is necessary for efficient replication of the virus and thus for the function of this viral transcription factor.

It is found in the host nucleus. In terms of biological role, stimulates viral early and late gene expression and thus play a crucial role in the regulation of productive infection. Selectively drives host RNA Pol II transcription initiation at a subset of viral early-late and late promoters without substantially affecting Pol II transcription of expressed host genes. Mechanistically, forms a repressive complex at the major immediate-early promoter region involving direct association with host nucleosomes and TBP. Concerning activation, stimulates transcription by binding nearby, but not within, core promoter regions. In addition, activates quiescent cells to reenter the cell cycle and up-regulates several E2F-responsive genes, which are responsible for pushing the cell into S phase. In S-phase, inhibits cellular DNA synthesis and blocks further cell cycle progression. This chain is Viral transcription factor IE2 (UL122), found in Human cytomegalovirus (strain AD169) (HHV-5).